Consider the following 317-residue polypeptide: Probable RuBisCO transcriptional regulator (317 aa).

Residues 6-63 form the HTH lysR-type domain; sequence FTLDQLRILKAIAKEGSFKKAANSLYVSQPAISLQIQNLERQLNVALFERGNKKATLT. The H-T-H motif DNA-binding region spans 23-42; sequence FKKAANSLYVSQPAISLQIQ.

Belongs to the LysR transcriptional regulatory family.

It localises to the plastid. The protein resides in the chloroplast. Trans-acting transcriptional regulator of RuBisCO genes (rbcL and rbcS) expression. This chain is Probable RuBisCO transcriptional regulator (rbcR), found in Porphyra purpurea (Red seaweed).